The sequence spans 634 residues: DNA gyrase subunit B (634 aa).

Residues 416–530 (REIYIVEGDS…NGYIYIAMPP (115 aa)) form the Toprim domain. Residues Glu-422, Asp-495, and Asp-497 each coordinate Mg(2+).

Belongs to the type II topoisomerase GyrB family. As to quaternary structure, heterotetramer, composed of two GyrA and two GyrB chains. In the heterotetramer, GyrA contains the active site tyrosine that forms a transient covalent intermediate with DNA, while GyrB binds cofactors and catalyzes ATP hydrolysis. It depends on Mg(2+) as a cofactor. The cofactor is Mn(2+). Ca(2+) is required as a cofactor.

It is found in the cytoplasm. The enzyme catalyses ATP-dependent breakage, passage and rejoining of double-stranded DNA.. In terms of biological role, a type II topoisomerase that negatively supercoils closed circular double-stranded (ds) DNA in an ATP-dependent manner to modulate DNA topology and maintain chromosomes in an underwound state. Negative supercoiling favors strand separation, and DNA replication, transcription, recombination and repair, all of which involve strand separation. Also able to catalyze the interconversion of other topological isomers of dsDNA rings, including catenanes and knotted rings. Type II topoisomerases break and join 2 DNA strands simultaneously in an ATP-dependent manner. This is DNA gyrase subunit B from Borreliella burgdorferi (strain ATCC 35210 / DSM 4680 / CIP 102532 / B31) (Borrelia burgdorferi).